The primary structure comprises 340 residues: Uroporphyrinogen decarboxylase (340 aa).

Residues 21-25, Asp-71, Tyr-148, Ser-203, and His-316 contribute to the substrate site; that span reads RQAGR.

The protein belongs to the uroporphyrinogen decarboxylase family. As to quaternary structure, homodimer.

The protein localises to the cytoplasm. It carries out the reaction uroporphyrinogen III + 4 H(+) = coproporphyrinogen III + 4 CO2. The protein operates within porphyrin-containing compound metabolism; protoporphyrin-IX biosynthesis; coproporphyrinogen-III from 5-aminolevulinate: step 4/4. Functionally, catalyzes the decarboxylation of four acetate groups of uroporphyrinogen-III to yield coproporphyrinogen-III. The polypeptide is Uroporphyrinogen decarboxylase (Campylobacter jejuni (strain RM1221)).